The sequence spans 549 residues: Cytoplasmic trehalase (549 aa).

Residues arginine 168, 175–176 (WD), asparagine 212, 221–223 (RSQ), 292–294 (RDE), and glycine 324 contribute to the substrate site. Residues aspartate 326 and glutamate 509 each act as proton donor/acceptor in the active site. Residue glutamate 525 coordinates substrate.

This sequence belongs to the glycosyl hydrolase 37 family. Monomer.

It localises to the cytoplasm. It catalyses the reaction alpha,alpha-trehalose + H2O = alpha-D-glucose + beta-D-glucose. It participates in glycan degradation; trehalose degradation; D-glucose from alpha,alpha-trehalose: step 1/1. Hydrolyzes trehalose to glucose. Could be involved, in cells returning to low osmolarity conditions, in the utilization of the accumulated cytoplasmic trehalose, which was synthesized in response to high osmolarity. The sequence is that of Cytoplasmic trehalase from Escherichia coli (strain 55989 / EAEC).